The primary structure comprises 197 residues: MDMQSRIRRLFQASIETKQQAMEVLAPFIEQASQVMVNALLNEGKMLACGNGGSAGDAQHFSSELLNRFERERPSLPAIALTTDSSTITSIANDYSYNEIFSKQIRALGQPGDVLLAISTSGNSANIIQAIQAAHDREMIVVALTGRDGGGMASLLLPEDVEIRVPANVTARIQEVHLLAIHCLCDLIDSQLFGSEE.

In terms of domain architecture, SIS spans 36–197 (MVNALLNEGK…IDSQLFGSEE (162 aa)). A substrate-binding site is contributed by 51–53 (NGG). Zn(2+)-binding residues include histidine 60 and glutamate 64. Residues glutamate 64, 93–94 (ND), 119–121 (STS), serine 124, and glutamine 174 contribute to the substrate site. Residues glutamine 174 and histidine 182 each contribute to the Zn(2+) site.

The protein belongs to the SIS family. GmhA subfamily. In terms of assembly, homotetramer. It depends on Zn(2+) as a cofactor.

It is found in the cytoplasm. The enzyme catalyses 2 D-sedoheptulose 7-phosphate = D-glycero-alpha-D-manno-heptose 7-phosphate + D-glycero-beta-D-manno-heptose 7-phosphate. It functions in the pathway carbohydrate biosynthesis; D-glycero-D-manno-heptose 7-phosphate biosynthesis; D-glycero-alpha-D-manno-heptose 7-phosphate and D-glycero-beta-D-manno-heptose 7-phosphate from sedoheptulose 7-phosphate: step 1/1. Catalyzes the isomerization of sedoheptulose 7-phosphate in D-glycero-D-manno-heptose 7-phosphate. The sequence is that of Phosphoheptose isomerase from Pseudomonas syringae pv. syringae (strain B728a).